The chain runs to 77 residues: MFVKTGDKVKVIAGKDKGKEGTVLSVNVKKNRVVVKGVNKIKKHQKPSQTNANGGVVESEGSIHASNVKVISKKEDK.

The interval 42-61 is disordered; the sequence is KKHQKPSQTNANGGVVESEG.

It belongs to the universal ribosomal protein uL24 family. As to quaternary structure, part of the 50S ribosomal subunit.

In terms of biological role, one of two assembly initiator proteins, it binds directly to the 5'-end of the 23S rRNA, where it nucleates assembly of the 50S subunit. Functionally, one of the proteins that surrounds the polypeptide exit tunnel on the outside of the subunit. In Lactobacillus acidophilus (strain ATCC 700396 / NCK56 / N2 / NCFM), this protein is Large ribosomal subunit protein uL24.